The sequence spans 396 residues: MAETQVRNFNINFGPQHPAAHGVLRLVLELDGEVVERVDPHIGLLHRGTEKLMEAKTYLQALPYLDRLDYVAPMNQEHAYALAVERLLGIDVPKRGQLIRVLYSEIGRILNHLLNVTTQAMDVGALTPPLWGFEEREKLMVFYERACGARMHAAYFRPGGVHQDLPDQLVEDIGKWIDPFFNTLNNLDDLITPNRIFKQRNVDIGVVKLEDAWAWGFSGVMVRGSGAAWDLRKSQPYECYNEMEFDIPIGKNGDCYDRYLIRMEEMRQSARIMRQCVDLLLGKERVGPVSNADNKIVPPKRGEMKRSMEALIHHFKLYTEGYHVPAGEVYAAVEAPKGEFGVFLVSDGSNKPYRCKLRAPGFAHLQAMDFLCRGHMLADVSAILGSLDIVFGEVDR.

It belongs to the complex I 49 kDa subunit family. NDH-1 is composed of 14 different subunits. Subunits NuoB, C, D, E, F, and G constitute the peripheral sector of the complex.

It is found in the cell inner membrane. The catalysed reaction is a quinone + NADH + 5 H(+)(in) = a quinol + NAD(+) + 4 H(+)(out). Its function is as follows. NDH-1 shuttles electrons from NADH, via FMN and iron-sulfur (Fe-S) centers, to quinones in the respiratory chain. The immediate electron acceptor for the enzyme in this species is believed to be ubiquinone. Couples the redox reaction to proton translocation (for every two electrons transferred, four hydrogen ions are translocated across the cytoplasmic membrane), and thus conserves the redox energy in a proton gradient. The chain is NADH-quinone oxidoreductase subunit D from Brucella anthropi (strain ATCC 49188 / DSM 6882 / CCUG 24695 / JCM 21032 / LMG 3331 / NBRC 15819 / NCTC 12168 / Alc 37) (Ochrobactrum anthropi).